Consider the following 59-residue polypeptide: Large ribosomal subunit protein uL30 (59 aa).

The protein belongs to the universal ribosomal protein uL30 family. As to quaternary structure, part of the 50S ribosomal subunit.

The chain is Large ribosomal subunit protein uL30 from Alkaliphilus metalliredigens (strain QYMF).